Consider the following 353-residue polypeptide: UDP-N-acetylglucosamine--N-acetylmuramyl-(pentapeptide) pyrophosphoryl-undecaprenol N-acetylglucosamine transferase (353 aa).

Residues 10-12 (TGG), Asn124, Ser183, and Gln283 contribute to the UDP-N-acetyl-alpha-D-glucosamine site.

This sequence belongs to the glycosyltransferase 28 family. MurG subfamily.

It localises to the cell inner membrane. It catalyses the reaction di-trans,octa-cis-undecaprenyl diphospho-N-acetyl-alpha-D-muramoyl-L-alanyl-D-glutamyl-meso-2,6-diaminopimeloyl-D-alanyl-D-alanine + UDP-N-acetyl-alpha-D-glucosamine = di-trans,octa-cis-undecaprenyl diphospho-[N-acetyl-alpha-D-glucosaminyl-(1-&gt;4)]-N-acetyl-alpha-D-muramoyl-L-alanyl-D-glutamyl-meso-2,6-diaminopimeloyl-D-alanyl-D-alanine + UDP + H(+). The protein operates within cell wall biogenesis; peptidoglycan biosynthesis. Its function is as follows. Cell wall formation. Catalyzes the transfer of a GlcNAc subunit on undecaprenyl-pyrophosphoryl-MurNAc-pentapeptide (lipid intermediate I) to form undecaprenyl-pyrophosphoryl-MurNAc-(pentapeptide)GlcNAc (lipid intermediate II). This Helicobacter pylori (strain J99 / ATCC 700824) (Campylobacter pylori J99) protein is UDP-N-acetylglucosamine--N-acetylmuramyl-(pentapeptide) pyrophosphoryl-undecaprenol N-acetylglucosamine transferase.